Reading from the N-terminus, the 344-residue chain is Protein-arginine kinase (344 aa).

The region spanning 14 to 244 (IVLSSRIRLA…KQIIQQERLA (231 aa)) is the Phosphagen kinase C-terminal domain. ATP-binding positions include 17-21 (SSRIR), His-81, Arg-115, 166-170 (RASAM), and 197-202 (RGLYGE).

The protein belongs to the ATP:guanido phosphotransferase family.

It carries out the reaction L-arginyl-[protein] + ATP = N(omega)-phospho-L-arginyl-[protein] + ADP + H(+). In terms of biological role, catalyzes the specific phosphorylation of arginine residues in proteins. In Clostridium novyi (strain NT), this protein is Protein-arginine kinase.